The chain runs to 369 residues: MKIVAEASVPYLRGIVDPVADITYLHSDCFSPDTIRHARVLIVRSITKCTPALLQGTDVRLITTATAGFDHIDREYCESHGILWRNSPGCNATAVAQYVMCCLCRLALREGFSLKEKVMGIVGVGHVGGELKRLASAYGMEFLLCDPPRSEAEQDNSFLPLSRLVEQCDIISFHVPLTHEDPHATYHLIGEAFLRSCADKRPILINACRGAVADTQALIRAVKSGWLQALVIDCWEGEPDIDLSLLDLADIATPHIAGFSADGKANGARMCLEAITEVFGLEFPLLHTLAPPPPTHPIIDLSLFPDHRIERALLHTFDPLVPDRSLRASPKTFEEQRKAYPHPREMKAFTVVGATTEEAKILRGMDFIS.

Substrate-binding residues include Ser-45 and Thr-66. Asp-146 contacts NAD(+). Arg-209 is an active-site residue. Asp-233 is an NAD(+) binding site. Residue Glu-238 is part of the active site. The Proton donor role is filled by His-255. NAD(+) is bound at residue Gly-258.

The protein belongs to the D-isomer specific 2-hydroxyacid dehydrogenase family. PdxB subfamily. Homodimer.

It localises to the cytoplasm. It carries out the reaction 4-phospho-D-erythronate + NAD(+) = (R)-3-hydroxy-2-oxo-4-phosphooxybutanoate + NADH + H(+). The protein operates within cofactor biosynthesis; pyridoxine 5'-phosphate biosynthesis; pyridoxine 5'-phosphate from D-erythrose 4-phosphate: step 2/5. Its function is as follows. Catalyzes the oxidation of erythronate-4-phosphate to 3-hydroxy-2-oxo-4-phosphonooxybutanoate. This chain is Erythronate-4-phosphate dehydrogenase, found in Porphyromonas gingivalis (strain ATCC BAA-308 / W83).